The sequence spans 275 residues: Tumor necrosis factor-inducible gene 6 protein (275 aa).

The first 17 residues, 1–17, serve as a signal peptide directing secretion; it reads MVVLLCLCVLLWEEAHG. The region spanning 36–129 is the Link domain; it reads GVYHREARAG…SERWDAYCYN (94 aa). Intrachain disulfides connect C58/C127, C82/C103, and C135/C161. N118 carries N-linked (GlcNAc...) asparagine glycosylation. The 113-residue stretch at 135–247 folds into the CUB domain; it reads CGGVFTDPKR…GGFQIKYVTV (113 aa). Ca(2+) contacts are provided by E183, D191, D232, S234, and V235. C188 and C210 form a disulfide bridge. Positions 253–264 are enriched in polar residues; sequence SSQAKNTSTTGN. The segment at 253–275 is disordered; that stretch reads SSQAKNTSTTGNKKFLPGRFSHL. N258 carries N-linked (GlcNAc...) asparagine glycosylation.

In terms of assembly, interacts (via Link domain) with inter-alpha-inhibitor (I-alpha-I) component bikunin. Interacts with ITIH2/HC2; this interaction is required for transesterification of the HC to hyaluronan. Interacts (via Link and CUB domains) with ITIH1. Chondroitin sulfate may be required for the stability of the complex. Interacts (via Link domain) with various C-X-C and C-C chemokines including PF4, CXCL8, CXCL11, CXCL12, CCL2, CCL7, CCL19, CCL21, and CCL27; this interaction interferes with chemokine binding to glycosaminoglycans. Interacts (primarily via Link domain) with BMP2; this interaction is inhibited by hyaluronan. Interacts (via both Link and CUB domains) with TNFSF11. Interacts (via CUB domain) with FN1 (via type III repeats 9-14); this interaction enhances fibronectin fibril assembly. TNFAIP6 may act as a bridging molecule between FN1 and THBS1. As to expression, expressed in epiphyseal and metaphyseal bone marrow of both the femur and tibia (at protein level).

The protein localises to the secreted. In terms of biological role, major regulator of extracellular matrix organization during tissue remodeling. Catalyzes the transfer of a heavy chain (HC) from inter-alpha-inhibitor (I-alpha-I) complex to hyaluronan. Cleaves the ester bond between the C-terminus of the HC and GalNAc residue of the chondroitin sulfate chain in I-alpha-I complex followed by transesterification of the HC to hyaluronan. In the process, potentiates the antiprotease function of I-alpha-I complex through release of free bikunin. Acts as a catalyst in the formation of hyaluronan-HC oligomers and hyaluronan-rich matrix surrounding the cumulus cell-oocyte complex, a necessary step for oocyte fertilization. Assembles hyaluronan in pericellular matrices that serve as platforms for receptor clustering and signaling. Enables binding of hyaluronan deposited on the surface of macrophages to LYVE1 on lymphatic endothelium and facilitates macrophage extravasation. Alters hyaluronan binding to functionally latent CD44 on vascular endothelium, switching CD44 into an active state that supports leukocyte rolling. Modulates the interaction of chemokines with extracellular matrix components and proteoglycans on endothelial cell surface, likely preventing chemokine gradient formation. In a negative feedback mechanism, may limit excessive neutrophil recruitment at inflammatory sites by antagonizing the association of CXCL8 with glycosaminoglycans on vascular endothelium. Has a role in osteogenesis and bone remodeling. Inhibits BMP2-dependent differentiation of mesenchymal stem cell to osteoblasts. Protects against bone erosion during inflammation by inhibiting TNFSF11/RANKL-dependent osteoclast activation. The protein is Tumor necrosis factor-inducible gene 6 protein (Tnfaip6) of Mus musculus (Mouse).